Reading from the N-terminus, the 238-residue chain is Cysteine-rich venom protein pseudechetoxin-like (238 aa).

Positions 1–19 (MIAFLVLLSLAAVLQQSSG) are cleaved as a signal peptide. Residues 20 to 28 (TVDFASESS) constitute a propeptide that is removed on maturation. The SCP domain maps to 38-164 (VDKHNDLRRS…STKYLYVCQY (127 aa)). 8 cysteine pairs are disulfide-bonded: C75/C153, C92/C165, C148/C162, C184/C191, C187/C196, C200/C233, C209/C227, and C218/C231. A ShKT domain is found at 200-233 (CKHNDDLSNCKTLVKKHKCQTEWIKSKCPATCFC).

Belongs to the CRISP family. Expressed by the venom gland.

The protein localises to the secreted. Blocks olfactory (CNGA2) and retinal (CNGA1) CNG channel currents. Does not affect neither depolarization- nor caffeine-induced contraction of smooth muscle. The protein is Cysteine-rich venom protein pseudechetoxin-like of Pseudonaja textilis (Eastern brown snake).